The following is a 246-amino-acid chain: tRNA pseudouridine synthase A (246 aa).

Catalysis depends on Asp52, which acts as the Nucleophile. Tyr111 serves as a coordination point for substrate.

It belongs to the tRNA pseudouridine synthase TruA family. As to quaternary structure, homodimer.

It carries out the reaction uridine(38/39/40) in tRNA = pseudouridine(38/39/40) in tRNA. Formation of pseudouridine at positions 38, 39 and 40 in the anticodon stem and loop of transfer RNAs. The protein is tRNA pseudouridine synthase A of Ehrlichia ruminantium (strain Gardel).